Reading from the N-terminus, the 429-residue chain is Enolase (429 aa).

Residue Q162 coordinates (2R)-2-phosphoglycerate. E204 functions as the Proton donor in the catalytic mechanism. Mg(2+) is bound by residues D241, E288, and D315. The (2R)-2-phosphoglycerate site is built by K340, R369, S370, and K391. The active-site Proton acceptor is K340.

The protein belongs to the enolase family. Requires Mg(2+) as cofactor.

It is found in the cytoplasm. It localises to the secreted. Its subcellular location is the cell surface. It catalyses the reaction (2R)-2-phosphoglycerate = phosphoenolpyruvate + H2O. It participates in carbohydrate degradation; glycolysis; pyruvate from D-glyceraldehyde 3-phosphate: step 4/5. Catalyzes the reversible conversion of 2-phosphoglycerate (2-PG) into phosphoenolpyruvate (PEP). It is essential for the degradation of carbohydrates via glycolysis. The protein is Enolase of Bacteroides fragilis (strain ATCC 25285 / DSM 2151 / CCUG 4856 / JCM 11019 / LMG 10263 / NCTC 9343 / Onslow / VPI 2553 / EN-2).